The following is a 266-amino-acid chain: Glutamate racemase (266 aa).

Residues aspartate 9 to serine 10 and tyrosine 41 to glycine 42 each bind substrate. Catalysis depends on cysteine 72, which acts as the Proton donor/acceptor. Asparagine 73 to threonine 74 is a binding site for substrate. Residue cysteine 183 is the Proton donor/acceptor of the active site. Threonine 184 to histidine 185 is a binding site for substrate.

This sequence belongs to the aspartate/glutamate racemases family.

It carries out the reaction L-glutamate = D-glutamate. It functions in the pathway cell wall biogenesis; peptidoglycan biosynthesis. Functionally, provides the (R)-glutamate required for cell wall biosynthesis. The chain is Glutamate racemase from Listeria innocua serovar 6a (strain ATCC BAA-680 / CLIP 11262).